We begin with the raw amino-acid sequence, 84 residues long: Cryptic plasmid protein A (84 aa).

The protein is Cryptic plasmid protein A (cppA) of Neisseria gonorrhoeae.